A 247-amino-acid chain; its full sequence is Enolase-phosphatase E1 (247 aa).

Positions 12 and 14 each coordinate Mg(2+). Substrate is bound by residues 141 to 142 and Lys-175; that span reads SS. Position 200 (Asp-200) interacts with Mg(2+).

Belongs to the HAD-like hydrolase superfamily. MasA/MtnC family. Monomer. Mg(2+) serves as cofactor.

It localises to the cytoplasm. The protein resides in the nucleus. The enzyme catalyses 5-methylsulfanyl-2,3-dioxopentyl phosphate + H2O = 1,2-dihydroxy-5-(methylsulfanyl)pent-1-en-3-one + phosphate. Its pathway is amino-acid biosynthesis; L-methionine biosynthesis via salvage pathway; L-methionine from S-methyl-5-thio-alpha-D-ribose 1-phosphate: step 3/6. It functions in the pathway amino-acid biosynthesis; L-methionine biosynthesis via salvage pathway; L-methionine from S-methyl-5-thio-alpha-D-ribose 1-phosphate: step 4/6. Its function is as follows. Bifunctional enzyme that catalyzes the enolization of 2,3-diketo-5-methylthiopentyl-1-phosphate (DK-MTP-1-P) into the intermediate 2-hydroxy-3-keto-5-methylthiopentenyl-1-phosphate (HK-MTPenyl-1-P), which is then dephosphorylated to form the acireductone 1,2-dihydroxy-3-keto-5-methylthiopentene (DHK-MTPene). The protein is Enolase-phosphatase E1 of Drosophila willistoni (Fruit fly).